The sequence spans 81 residues: U10-myrmicitoxin-Mri1b (81 aa).

The N-terminal stretch at 1 to 26 (MRLSYISLTLAIIFVMAIVHAPETEA) is a signal peptide. Positions 27 to 52 (KAYPEADAVAEAIAVGEADAVGVADP) are excised as a propeptide. A Valine amide modification is found at V80.

This sequence belongs to the formicidae venom precursor-01 superfamily. As to expression, expressed by the venom gland.

It localises to the secreted. Induces paralysis after injection into blowflies (L.caesar), and then death within 24 hours. May have antimicrobial properties, like most ant linear peptides. This chain is U10-myrmicitoxin-Mri1b, found in Manica rubida (European giant red ant).